The chain runs to 160 residues: SsrA-binding protein (160 aa).

The protein belongs to the SmpB family.

The protein resides in the cytoplasm. In terms of biological role, required for rescue of stalled ribosomes mediated by trans-translation. Binds to transfer-messenger RNA (tmRNA), required for stable association of tmRNA with ribosomes. tmRNA and SmpB together mimic tRNA shape, replacing the anticodon stem-loop with SmpB. tmRNA is encoded by the ssrA gene; the 2 termini fold to resemble tRNA(Ala) and it encodes a 'tag peptide', a short internal open reading frame. During trans-translation Ala-aminoacylated tmRNA acts like a tRNA, entering the A-site of stalled ribosomes, displacing the stalled mRNA. The ribosome then switches to translate the ORF on the tmRNA; the nascent peptide is terminated with the 'tag peptide' encoded by the tmRNA and targeted for degradation. The ribosome is freed to recommence translation, which seems to be the essential function of trans-translation. This Haemophilus ducreyi (strain 35000HP / ATCC 700724) protein is SsrA-binding protein.